A 293-amino-acid polypeptide reads, in one-letter code: RNA-binding Raly-like protein (293 aa).

An RRM domain is found at 21–92; it reads SRVFIGNLNT…QPLDINMAGE (72 aa). 2 disordered regions span residues 159–195 and 245–293; these read PRAA…KLKS and QDEC…LQIK. The span at 176 to 192 shows a compositional bias: low complexity; sequence KGGSRSAVSGSSSSGSK. A coiled-coil region spans residues 192–254; sequence KLKSDELQTI…QDECVSENAD (63 aa). Residues 259–284 are compositionally biased toward acidic residues; the sequence is EPAEGAPDADGEELTDGVEEDFDEDG.

The protein belongs to the RRM HNRPC family. RALY subfamily.

The sequence is that of RNA-binding Raly-like protein (RALYL) from Bos taurus (Bovine).